Here is a 268-residue protein sequence, read N- to C-terminus: uncharacterized protein (268 aa).

The segment at 21–61 (CVICLQKDGLRAQLSPCGHDQFDYSCICRWMDQSLTCPICK) adopts an RING-type; degenerate zinc-finger fold.

It localises to the mitochondrion. The protein localises to the nucleus. This is an uncharacterized protein from Schizosaccharomyces pombe (strain 972 / ATCC 24843) (Fission yeast).